Consider the following 151-residue polypeptide: Large ribosomal subunit protein bL9 (151 aa).

Belongs to the bacterial ribosomal protein bL9 family.

In terms of biological role, binds to the 23S rRNA. The polypeptide is Large ribosomal subunit protein bL9 (Carboxydothermus hydrogenoformans (strain ATCC BAA-161 / DSM 6008 / Z-2901)).